We begin with the raw amino-acid sequence, 255 residues long: Vitamin B12 import ATP-binding protein BtuD (255 aa).

The 239-residue stretch at 2–240 (MRVKHIAVGS…AGLAEVFKTQ (239 aa)) folds into the ABC transporter domain. 30–37 (GPNGSGKS) is an ATP binding site.

It belongs to the ABC transporter superfamily. Vitamin B12 importer (TC 3.A.1.13.1) family. As to quaternary structure, the complex is composed of two ATP-binding proteins (BtuD), two transmembrane proteins (BtuC) and a solute-binding protein (BtuF).

The protein resides in the cell inner membrane. It catalyses the reaction an R-cob(III)alamin(out) + ATP + H2O = an R-cob(III)alamin(in) + ADP + phosphate + H(+). Part of the ABC transporter complex BtuCDF involved in vitamin B12 import. Responsible for energy coupling to the transport system. The protein is Vitamin B12 import ATP-binding protein BtuD of Vibrio parahaemolyticus serotype O3:K6 (strain RIMD 2210633).